The primary structure comprises 415 residues: BTB/POZ and MATH domain-containing protein 6 (415 aa).

Residues 1–33 form a disordered region; that stretch reads MSKLMTRTSGSSSPNTIPDQIESPTSSRSVTQT. Residues 35-169 enclose the MATH domain; it reads NGSHQFVIQG…DDCLKINCTV (135 aa). In terms of domain architecture, BTB spans 205–271; sequence SDVTFDVAGE…MYKDSLPGDV (67 aa). Positions 385 to 415 are disordered; sequence SSSGGGKSQSVWAQLSNGGETSSRRVRQRTT. Over residues 392 to 405 the composition is skewed to polar residues; that stretch reads SQSVWAQLSNGGET.

The protein belongs to the Tdpoz family. As to quaternary structure, heterodimer with BPM1. Interacts with RAP2-4. Interacts with CUL3A. Binds to MYB56 at the promoter of FLOWERING LOCUS T (FT). Ubiquitous.

It localises to the nucleus. Its subcellular location is the cytoplasm. Its pathway is protein modification; protein ubiquitination. May act as a substrate-specific adapter of an E3 ubiquitin-protein ligase complex (CUL3-RBX1-BTB) which mediates the ubiquitination and subsequent proteasomal degradation of target proteins. The chain is BTB/POZ and MATH domain-containing protein 6 (BPM6) from Arabidopsis thaliana (Mouse-ear cress).